The primary structure comprises 101 residues: NADH-quinone oxidoreductase subunit K (101 aa).

The next 3 helical transmembrane spans lie at 4–24 (LPHY…GIFV), 30–50 (IVIL…LVAF), and 61–81 (IFAM…LAIL).

This sequence belongs to the complex I subunit 4L family. NDH-1 is composed of 14 different subunits. Subunits NuoA, H, J, K, L, M, N constitute the membrane sector of the complex.

The protein localises to the cell inner membrane. It carries out the reaction a quinone + NADH + 5 H(+)(in) = a quinol + NAD(+) + 4 H(+)(out). NDH-1 shuttles electrons from NADH, via FMN and iron-sulfur (Fe-S) centers, to quinones in the respiratory chain. The immediate electron acceptor for the enzyme in this species is believed to be ubiquinone. Couples the redox reaction to proton translocation (for every two electrons transferred, four hydrogen ions are translocated across the cytoplasmic membrane), and thus conserves the redox energy in a proton gradient. This chain is NADH-quinone oxidoreductase subunit K, found in Caulobacter vibrioides (strain ATCC 19089 / CIP 103742 / CB 15) (Caulobacter crescentus).